Reading from the N-terminus, the 299-residue chain is N-acetylneuraminate lyase (299 aa).

S45 and S46 together coordinate aceneuramate. The Proton donor role is filled by Y134. The active-site Schiff-base intermediate with substrate is the K161. Aceneuramate is bound by residues T163, G185, D187, and E188.

It belongs to the DapA family. NanA subfamily. Homotetramer.

Its subcellular location is the cytoplasm. The catalysed reaction is aceneuramate = aldehydo-N-acetyl-D-mannosamine + pyruvate. It functions in the pathway amino-sugar metabolism; N-acetylneuraminate degradation; D-fructose 6-phosphate from N-acetylneuraminate: step 1/5. In terms of biological role, catalyzes the reversible aldol cleavage of N-acetylneuraminic acid (sialic acid; Neu5Ac) to form pyruvate and N-acetylmannosamine (ManNAc) via a Schiff base intermediate. This is N-acetylneuraminate lyase from Rhizobium meliloti (strain 1021) (Ensifer meliloti).